Reading from the N-terminus, the 626-residue chain is Ankyrin repeat domain-containing protein 13B (626 aa).

Residue methionine 1 is modified to N-acetylmethionine. ANK repeat units lie at residues 47 to 76 (RGRTPLHLATTLGHLECARVLLAHGADVGR) and 80 to 109 (SGWTVLQEAVSTRDLELVQLVLRYRDYQRV). A disordered region spans residues 442–474 (PVPSVRGSPSSETPSPGSDSSSVSSSSSTTSCR). Over residues 449-472 (SPSSETPSPGSDSSSVSSSSSTTS) the composition is skewed to low complexity. The region spanning 503-522 (DDDDLLQFAIQQSLLEAGSE) is the UIM 1 domain. Disordered regions lie at residues 534–590 (NSKP…DEQL) and 595–614 (ELSAQEQEERRRRARQEEEE). The span at 554-573 (PPTPQRQPAPPASVPSPRPS) shows a compositional bias: pro residues. 2 consecutive UIM domains span residues 585–604 (SYDEQLRLAMELSAQEQEER) and 610–626 (QEEEELERILRLSLTEQ).

Interacts with EGFR (ubiquitinated); the interaction is direct and may regulate EGFR internalization.

The protein localises to the cell membrane. Its subcellular location is the late endosome. It is found in the early endosome. In terms of biological role, ubiquitin-binding protein that specifically recognizes and binds 'Lys-63'-linked ubiquitin. Does not bind 'Lys-48'-linked ubiquitin. Positively regulates the internalization of ligand-activated EGFR by binding to the Ub moiety of ubiquitinated EGFR at the cell membrane. This chain is Ankyrin repeat domain-containing protein 13B (ANKRD13B), found in Homo sapiens (Human).